Consider the following 439-residue polypeptide: Exosome complex component RRP45 (439 aa).

The interval 1–268 (MKETPLSNCE…AEITELILKA (268 aa)) is ARE binding. A Phosphoserine modification is found at serine 65. The residue at position 297 (lysine 297) is an N6-acetyllysine; alternate. Residue lysine 297 forms a Glycyl lysine isopeptide (Lys-Gly) (interchain with G-Cter in SUMO1); alternate linkage. Lysine 297 is covalently cross-linked (Glycyl lysine isopeptide (Lys-Gly) (interchain with G-Cter in SUMO2); alternate). Phosphoserine occurs at positions 306, 325, 327, and 346. 2 disordered regions span residues 335 to 363 (GTAQ…GGGD) and 391 to 439 (LSDS…RAAN). Positions 349 to 361 (DLEDSEKEDDEGG) are enriched in acidic residues. Phosphoserine occurs at positions 392, 394, 409, and 411. Residue lysine 419 forms a Glycyl lysine isopeptide (Lys-Gly) (interchain with G-Cter in SUMO2) linkage. A compositionally biased stretch (basic residues) spans 425–439 (SKKPVKRRKKKRAAN).

This sequence belongs to the RNase PH family. In terms of assembly, component of the RNA exosome core complex (Exo-9), composed of EXOSC1, EXOSC2, EXOSC3, EXOSC4, EXOSC5, EXOSC6, EXOSC7, EXOSC8 and EXOSC9; within the complex interacts with EXOSC3, EXOSC4, EXOSC5 and DIS3. The catalytically inactive RNA exosome core complex (Exo-9) associates with the catalytic subunit EXOSC10/RRP6. Exo-9 may associate with DIS3 to form the nucleolar exosome complex, or DIS3L to form the cytoplasmic exosome complex. Exo-9 is formed by a hexameric base ring consisting of the heterodimers EXOSC4-EXOSC9, EXOSC5-EXOSC8 and EXOSC6-EXOSC7, and a cap ring consisting of EXOSC1, EXOSC2 and EXOSC3. The RNA exosome complex associates with cofactors C1D/RRP47, MPHOSPH6/MPP6 and MTREX/MTR4. Interacts (via C-terminus region) with SETX (via N-terminus domain); the interaction enhances SETX sumoylation. Interacts with DIS3; the interaction is direct.

Its subcellular location is the cytoplasm. It localises to the nucleus. The protein localises to the nucleolus. The protein resides in the nucleoplasm. Functionally, non-catalytic component of the RNA exosome complex which has 3'-&gt;5' exoribonuclease activity and participates in a multitude of cellular RNA processing and degradation events. In the nucleus, the RNA exosome complex is involved in proper maturation of stable RNA species such as rRNA, snRNA and snoRNA, in the elimination of RNA processing by-products and non-coding 'pervasive' transcripts, such as antisense RNA species and promoter-upstream transcripts (PROMPTs), and of mRNAs with processing defects, thereby limiting or excluding their export to the cytoplasm. The RNA exosome may be involved in Ig class switch recombination (CSR) and/or Ig variable region somatic hypermutation (SHM) by targeting AICDA deamination activity to transcribed dsDNA substrates. In the cytoplasm, the RNA exosome complex is involved in general mRNA turnover and specifically degrades inherently unstable mRNAs containing AU-rich elements (AREs) within their 3' untranslated regions, and in RNA surveillance pathways, preventing translation of aberrant mRNAs. It seems to be involved in degradation of histone mRNA. The catalytic inactive RNA exosome core complex of 9 subunits (Exo-9) is proposed to play a pivotal role in the binding and presentation of RNA for ribonucleolysis, and to serve as a scaffold for the association with catalytic subunits and accessory proteins or complexes. EXOSC9 binds to ARE-containing RNAs. This is Exosome complex component RRP45 (EXOSC9) from Homo sapiens (Human).